The sequence spans 193 residues: Large ribosomal subunit protein uL5 (193 aa).

This sequence belongs to the universal ribosomal protein uL5 family. Part of the 50S ribosomal subunit; part of the 5S rRNA/L5/L18/L25 subcomplex. Contacts the 5S rRNA and the P site tRNA. Forms a bridge to the 30S subunit in the 70S ribosome.

In terms of biological role, this is one of the proteins that bind and probably mediate the attachment of the 5S RNA into the large ribosomal subunit, where it forms part of the central protuberance. In the 70S ribosome it contacts protein S13 of the 30S subunit (bridge B1b), connecting the 2 subunits; this bridge is implicated in subunit movement. Contacts the P site tRNA; the 5S rRNA and some of its associated proteins might help stabilize positioning of ribosome-bound tRNAs. The sequence is that of Large ribosomal subunit protein uL5 from Novosphingobium aromaticivorans (strain ATCC 700278 / DSM 12444 / CCUG 56034 / CIP 105152 / NBRC 16084 / F199).